Here is a 160-residue protein sequence, read N- to C-terminus: Sulfur-rich protein (160 aa).

2 helical membrane passes run isoleucine 62–leucine 82 and phenylalanine 91–methionine 111.

It is found in the membrane. This chain is Sulfur-rich protein (srp), found in Chlamydia caviae (strain ATCC VR-813 / DSM 19441 / 03DC25 / GPIC) (Chlamydophila caviae).